Consider the following 239-residue polypeptide: ATP-dependent dethiobiotin synthetase BioD (239 aa).

15 to 20 (EIGKTF) provides a ligand contact to ATP. Mg(2+) is bound at residue Thr-19. Lys-40 is a catalytic residue. ATP-binding positions include Asp-57, 118-121 (EGVG), and 178-179 (NH). 2 residues coordinate Mg(2+): Asp-57 and Glu-118.

Belongs to the dethiobiotin synthetase family. Homodimer. The cofactor is Mg(2+).

It localises to the cytoplasm. The enzyme catalyses (7R,8S)-7,8-diammoniononanoate + CO2 + ATP = (4R,5S)-dethiobiotin + ADP + phosphate + 3 H(+). It participates in cofactor biosynthesis; biotin biosynthesis; biotin from 7,8-diaminononanoate: step 1/2. Catalyzes a mechanistically unusual reaction, the ATP-dependent insertion of CO2 between the N7 and N8 nitrogen atoms of 7,8-diaminopelargonic acid (DAPA, also called 7,8-diammoniononanoate) to form a ureido ring. In Burkholderia multivorans (strain ATCC 17616 / 249), this protein is ATP-dependent dethiobiotin synthetase BioD.